The primary structure comprises 139 residues: MIIGIGSDLIDITRIAKVIERHGERFLDRIFTETERARAGRRDKQPNLVAATYAKRFAAKEACSKALGTGIRQGVWWRDMGVVNLPGGRPTMALTGGAKARLDALTPAGMIAQIDLSITDEWPLAQAFVVISAIPATAS.

Mg(2+) contacts are provided by Asp8 and Glu61.

This sequence belongs to the P-Pant transferase superfamily. AcpS family. It depends on Mg(2+) as a cofactor.

It localises to the cytoplasm. The catalysed reaction is apo-[ACP] + CoA = holo-[ACP] + adenosine 3',5'-bisphosphate + H(+). Transfers the 4'-phosphopantetheine moiety from coenzyme A to a Ser of acyl-carrier-protein. This chain is Holo-[acyl-carrier-protein] synthase, found in Rhodopseudomonas palustris (strain BisB5).